Here is a 154-residue protein sequence, read N- to C-terminus: Methylglyoxal synthase (154 aa).

In terms of domain architecture, MGS-like spans 6–154; sequence QSLPAKKNIA…KYLATRQIDI (149 aa). Substrate is bound by residues His-19, Lys-23, 45–48, and 65–66; these read TGTT and SG. Asp-71 functions as the Proton donor/acceptor in the catalytic mechanism. Substrate is bound at residue His-98.

It belongs to the methylglyoxal synthase family.

The enzyme catalyses dihydroxyacetone phosphate = methylglyoxal + phosphate. Catalyzes the formation of methylglyoxal from dihydroxyacetone phosphate. This is Methylglyoxal synthase from Pseudoalteromonas translucida (strain TAC 125).